The following is a 320-amino-acid chain: Ferrochelatase (320 aa).

Fe cation-binding residues include H194 and E275.

Belongs to the ferrochelatase family. As to quaternary structure, monomer.

Its subcellular location is the cytoplasm. The catalysed reaction is heme b + 2 H(+) = protoporphyrin IX + Fe(2+). Its pathway is porphyrin-containing compound metabolism; protoheme biosynthesis; protoheme from protoporphyrin-IX: step 1/1. Functionally, catalyzes the ferrous insertion into protoporphyrin IX. This is Ferrochelatase from Escherichia coli (strain SMS-3-5 / SECEC).